The chain runs to 430 residues: Serine--tRNA ligase (430 aa).

The interval alanine 47–aspartate 66 is disordered. Threonine 231–glutamate 233 is a binding site for L-serine. Residue arginine 262–glutamate 264 participates in ATP binding. Residue glutamate 285 participates in L-serine binding. Position 349 to 352 (glutamate 349 to serine 352) interacts with ATP. An L-serine-binding site is contributed by serine 385.

Belongs to the class-II aminoacyl-tRNA synthetase family. Type-1 seryl-tRNA synthetase subfamily. As to quaternary structure, homodimer. The tRNA molecule binds across the dimer.

The protein localises to the cytoplasm. It carries out the reaction tRNA(Ser) + L-serine + ATP = L-seryl-tRNA(Ser) + AMP + diphosphate + H(+). The enzyme catalyses tRNA(Sec) + L-serine + ATP = L-seryl-tRNA(Sec) + AMP + diphosphate + H(+). It participates in aminoacyl-tRNA biosynthesis; selenocysteinyl-tRNA(Sec) biosynthesis; L-seryl-tRNA(Sec) from L-serine and tRNA(Sec): step 1/1. Catalyzes the attachment of serine to tRNA(Ser). Is also able to aminoacylate tRNA(Sec) with serine, to form the misacylated tRNA L-seryl-tRNA(Sec), which will be further converted into selenocysteinyl-tRNA(Sec). This chain is Serine--tRNA ligase, found in Paracoccus denitrificans (strain Pd 1222).